A 790-amino-acid chain; its full sequence is Probable copper-transporting ATPase SynA (790 aa).

The Cytoplasmic segment spans residues 1–105; the sequence is MPAAIVHSAD…IPPLQQQRLQ (105 aa). The HMA domain maps to 14-81; sequence TSILVEVEGM…EITGLGFRAQ (68 aa). Cys-25 and Cys-28 together coordinate Cu cation. Residues 106–125 traverse the membrane as a helical segment; it reads LAIAAFLLIVSSWGHLGHWL. Residues 126–134 lie on the Extracellular side of the membrane; sequence DHPLPGTDQ. Residues 135–154 traverse the membrane as a helical segment; that stretch reads LWFHALLAIWALLGPGRSIL. The Cytoplasmic segment spans residues 155–166; sequence QAGWQGLRCGAP. The chain crosses the membrane as a helical span at residues 167–189; it reads NMNSLVLLGTGSAYLASLVALLW. Topologically, residues 190–193 are extracellular; that stretch reads PQLG. Residues 194–211 form a helical membrane-spanning segment; it reads WVCFLDEPVMLLGFILLG. Residues 212–357 are Cytoplasmic-facing; it reads RTLEEQARFR…RKAPVQRFAD (146 aa). Residues 358 to 380 form a helical membrane-spanning segment; the sequence is AIAGRFVYGVCAIAALTFGFWAT. Topologically, residues 381–416 are extracellular; sequence LGSRWWPQVLQQPLPGLLIHAPHHGMEMAHPHSHSP. Residues 417 to 439 traverse the membrane as a helical segment; sequence LLLALTLAISVLVVACPCALGLA. Over 440-726 the chain is Cytoplasmic; the sequence is TPTAILVATG…QMGLRTIRQN (287 aa). Asp-476 (4-aspartylphosphate intermediate) is an active-site residue. The Mg(2+) site is built by Asp-669 and Asp-673. The chain crosses the membrane as a helical span at residues 727–749; that stretch reads LTWALGYNVVMLPLAAGAFLPAY. Residues 750–753 are Extracellular-facing; sequence GLAL. Residues 754–776 form a helical membrane-spanning segment; sequence TPAIAGACMAVSSLAVVSNSLLL. The Cytoplasmic portion of the chain corresponds to 777-790; it reads RYWFRRSLNHSVSV.

Belongs to the cation transport ATPase (P-type) (TC 3.A.3) family. Type IB subfamily.

The protein resides in the cell membrane. It carries out the reaction Cu(2+)(in) + ATP + H2O = Cu(2+)(out) + ADP + phosphate + H(+). Its function is as follows. Involved in copper transport. This Synechococcus sp. (strain ATCC 27144 / PCC 6301 / SAUG 1402/1) (Anacystis nidulans) protein is Probable copper-transporting ATPase SynA (synA).